Consider the following 109-residue polypeptide: ATPase inhibitor, mitochondrial (109 aa).

The N-terminal 22 residues, 1 to 22 (MAGSSSLLRAGIRNVLLMQMRR), are a transit peptide targeting the mitochondrion. The segment at 27–56 (LGELGKGAGKGGGGGGSVREAGGAFGKRQA) is N-terminal inhibitory region. Positions 27–109 (LGELGKGAGK…KSKIKKLNDD (83 aa)) are disordered. Positions 30–43 (LGKGAGKGGGGGGS) are enriched in gly residues. Basic and acidic residues-rich tracts occupy residues 55 to 69 (QAAE…KEQE) and 77 to 98 (HHEE…EIER). Residues 71–109 (IASLRKHHEEEIRHHKGEIERLQKEIERHKSKIKKLNDD) adopt a coiled-coil conformation. Positions 78–109 (HEEEIRHHKGEIERLQKEIERHKSKIKKLNDD) are antiparallel alpha-helical coiled coil region. A compositionally biased stretch (basic residues) spans 99–109 (HKSKIKKLNDD).

The protein belongs to the ATPase inhibitor family. In terms of assembly, homodimer; represents the active form and is present at a pH value below 6.5. Homotetramer; represents the inactive form and is present at a pH value above 7.0.

The protein localises to the mitochondrion. Endogenous F(1)F(o)-ATPase inhibitor limiting ATP depletion when the mitochondrial membrane potential falls below a threshold and the F(1)F(o)-ATP synthase starts hydrolyzing ATP to pump protons out of the mitochondrial matrix. Required to avoid the consumption of cellular ATP when the F(1)F(o)-ATP synthase enzyme acts as an ATP hydrolase. Indirectly acts as a regulator of heme synthesis in erythroid tissues: regulates heme synthesis by modulating the mitochondrial pH and redox potential, allowing fech to efficiently catalyze the incorporation of iron into protoporphyrin IX to produce heme. The chain is ATPase inhibitor, mitochondrial from Xenopus tropicalis (Western clawed frog).